We begin with the raw amino-acid sequence, 307 residues long: Elongation factor Ts (307 aa).

The involved in Mg(2+) ion dislocation from EF-Tu stretch occupies residues 80–83; sequence TDFV.

The protein belongs to the EF-Ts family.

It is found in the cytoplasm. In terms of biological role, associates with the EF-Tu.GDP complex and induces the exchange of GDP to GTP. It remains bound to the aminoacyl-tRNA.EF-Tu.GTP complex up to the GTP hydrolysis stage on the ribosome. This chain is Elongation factor Ts, found in Clostridium botulinum (strain Kyoto / Type A2).